The following is a 78-amino-acid chain: Small ribosomal subunit protein uS17 (78 aa).

It belongs to the universal ribosomal protein uS17 family. In terms of assembly, part of the 30S ribosomal subunit.

In terms of biological role, one of the primary rRNA binding proteins, it binds specifically to the 5'-end of 16S ribosomal RNA. The protein is Small ribosomal subunit protein uS17 of Sinorhizobium fredii (strain NBRC 101917 / NGR234).